Consider the following 284-residue polypeptide: Ribose-5-phosphate isomerase (284 aa).

This sequence belongs to the ribose 5-phosphate isomerase family.

It is found in the cytoplasm. The catalysed reaction is aldehydo-D-ribose 5-phosphate = D-ribulose 5-phosphate. The protein operates within carbohydrate degradation; pentose phosphate pathway; D-ribose 5-phosphate from D-ribulose 5-phosphate (non-oxidative stage): step 1/1. This Lodderomyces elongisporus (strain ATCC 11503 / CBS 2605 / JCM 1781 / NBRC 1676 / NRRL YB-4239) (Yeast) protein is Ribose-5-phosphate isomerase (RKI1).